The sequence spans 424 residues: MVTCEAGIASVQQAIKDIADGNFVIVIDRESRENEGDLILAGEKVSAEKMAFLLSHTTGIVCASVTREQARVLDLPAMVQENQCAFKTAFTVSVDASSGITTGVSAADRTRTVQLLSDPTSISQSFVRPGHVFPLVSQPGGVVKRPGHTEASMDLMRLAGMYPCGIFAELVNADHSMMRQQQILDFAEQHGFTVITVDDLITYRWTFDSLVEHVSSARIPTKYGEFFIHVYKSIIDGTEHFALVKGDIREQESVPVRVHSECLTGDVLGSCRCDCGAQLDMAMRYIAEQGLGVIVYLRGQEGRGIGFGHKIQAYALQDLGYDTVEANLQLSFPIDAREYGVAAQILKDLRLTSVRLITHNPKKFFELQRLGIHILDRIVLPVIVSSENERYLRTKKDRMGHWLNFPVLNESEDEYETVERTSCC.

A DHBP synthase region spans residues 1 to 206 (MVTCEAGIAS…VDDLITYRWT (206 aa)). D-ribulose 5-phosphate contacts are provided by residues 32-33 (RE), Asp-37, 145-149 (RPGHT), and Glu-169. Glu-33 is a Mg(2+) binding site. His-148 is a Mg(2+) binding site. Positions 207–424 (FDSLVEHVSS…YETVERTSCC (218 aa)) are GTP cyclohydrolase II. 257 to 261 (RVHSE) is a GTP binding site. Residues Cys-262, Cys-273, and Cys-275 each contribute to the Zn(2+) site. GTP-binding positions include Gln-278, 301–303 (EGR), and Thr-323. The active-site Proton acceptor; for GTP cyclohydrolase activity is the Asp-335. The active-site Nucleophile; for GTP cyclohydrolase activity is the Arg-337. Residues Thr-358 and Lys-363 each contribute to the GTP site.

This sequence in the N-terminal section; belongs to the DHBP synthase family. It in the C-terminal section; belongs to the GTP cyclohydrolase II family. Mg(2+) is required as a cofactor. The cofactor is Mn(2+). Requires Zn(2+) as cofactor.

It carries out the reaction D-ribulose 5-phosphate = (2S)-2-hydroxy-3-oxobutyl phosphate + formate + H(+). The catalysed reaction is GTP + 4 H2O = 2,5-diamino-6-hydroxy-4-(5-phosphoribosylamino)-pyrimidine + formate + 2 phosphate + 3 H(+). It participates in cofactor biosynthesis; riboflavin biosynthesis; 2-hydroxy-3-oxobutyl phosphate from D-ribulose 5-phosphate: step 1/1. The protein operates within cofactor biosynthesis; riboflavin biosynthesis; 5-amino-6-(D-ribitylamino)uracil from GTP: step 1/4. Functionally, catalyzes the conversion of D-ribulose 5-phosphate to formate and 3,4-dihydroxy-2-butanone 4-phosphate. Its function is as follows. Catalyzes the conversion of GTP to 2,5-diamino-6-ribosylamino-4(3H)-pyrimidinone 5'-phosphate (DARP), formate and pyrophosphate. This is Riboflavin biosynthesis protein RibBA from Chlamydia muridarum (strain MoPn / Nigg).